We begin with the raw amino-acid sequence, 144 residues long: Protein NrdI (144 aa).

Belongs to the NrdI family.

Probably involved in ribonucleotide reductase function. This is Protein NrdI from Streptococcus pyogenes serotype M4 (strain MGAS10750).